Consider the following 585-residue polypeptide: Probable long-chain-fatty-acid--AMP ligase FadD30 (585 aa).

The protein belongs to the ATP-dependent AMP-binding enzyme family.

The protein operates within lipid metabolism; fatty acid biosynthesis. Its function is as follows. Catalyzes the activation of long-chain fatty acids as acyl-adenylates (acyl-AMP), which are then transferred to a multifunctional polyketide synthase (PKS) for further chain extension. The polypeptide is Probable long-chain-fatty-acid--AMP ligase FadD30 (fadD30) (Mycobacterium tuberculosis (strain CDC 1551 / Oshkosh)).